Here is a 126-residue protein sequence, read N- to C-terminus: DNA-directed RNA polymerase 35 kDa subunit (126 aa).

It belongs to the poxviridae DNA-directed RNA polymerase 35 kDa subunit family. In terms of assembly, the DNA-dependent RNA polymerase used for intermediate and late genes expression consists of eight subunits 147 kDa, 133 kDa, 35 kDa, 30 kDa, 22 kDa, 19 kDa, 18 kDa and 7 kDa totalling more than 500 kDa in mass. The same holoenzyme, with the addition of the transcription-specificity factor RAP94, is used for early gene expression.

The protein localises to the virion. The catalysed reaction is RNA(n) + a ribonucleoside 5'-triphosphate = RNA(n+1) + diphosphate. Functionally, part of the DNA-dependent RNA polymerase which catalyzes the transcription of viral DNA into RNA using the four ribonucleoside triphosphates as substrates. Responsible for the transcription of early, intermediate and late genes. DNA-dependent RNA polymerase associates with the early transcription factor (ETF) thereby allowing the early genes transcription. Late transcription, and probably also intermediate transcription, require newly synthesized RNA polymerase. The polypeptide is DNA-directed RNA polymerase 35 kDa subunit (RPO35) (Ovis aries (Sheep)).